The following is a 249-amino-acid chain: Phosphonates import ATP-binding protein PhnC (249 aa).

Residues 2-246 (IEFKKVEKVW…KLNESKLEEI (245 aa)) enclose the ABC transporter domain. 35 to 42 (GLSGAGKT) contributes to the ATP binding site.

The protein belongs to the ABC transporter superfamily. Phosphonates importer (TC 3.A.1.9.1) family. As to quaternary structure, the complex is composed of two ATP-binding proteins (PhnC), two transmembrane proteins (PhnE) and a solute-binding protein (PhnD).

The protein localises to the cell membrane. The enzyme catalyses phosphonate(out) + ATP + H2O = phosphonate(in) + ADP + phosphate + H(+). Part of the ABC transporter complex PhnCDE involved in phosphonates import. Responsible for energy coupling to the transport system. This is Phosphonates import ATP-binding protein PhnC from Mesoplasma florum (strain ATCC 33453 / NBRC 100688 / NCTC 11704 / L1) (Acholeplasma florum).